The chain runs to 770 residues: Potassium transporter 25 (770 aa).

Over 1-23 (MDLEAAHGAAAAPGKRRRRARES) the chain is Cytoplasmic. The chain crosses the membrane as a helical span at residues 24 to 44 (WGASLLLAYQSLGVVYGDVAT). At 45–70 (SPLYVYKSAFAGDDIQHSAGNEEIYG) the chain is on the extracellular side. A helical membrane pass occupies residues 71–91 (VLSFVFWTLTLISLVKYVLIV). At 92-152 (LRADDGGEGG…MLERYRVLQR (61 aa)) the chain is on the cytoplasmic side. Residues 153–173 (LLLLFALLGTCMVIGDGVLTP) traverse the membrane as a helical segment. The Extracellular segment spans residues 174 to 194 (AVSVYSAVSGLELSMEHEHHK). Residues 195-215 (YVQLPVTCAILIGLFALQHYG) form a helical membrane-spanning segment. Topologically, residues 216 to 218 (THR) are cytoplasmic. Residues 219-239 (VGFIFAPIVCVWLLCISAIGV) traverse the membrane as a helical segment. Residues 240-267 (YNIVHWNHHVYRALSPYYMYQFLKKTQT) lie on the Extracellular side of the membrane. A helical membrane pass occupies residues 268-288 (GGWMSLGGILLCVTGSEAMYA). The Cytoplasmic segment spans residues 289–299 (DLGHFSQSSIK). A helical transmembrane segment spans residues 300-320 (IAFMSVVYPALVLAYMGQAAY). Topologically, residues 321–346 (ISQHHSFENAYHIGFYVSVPEKLRWP) are extracellular. A helical membrane pass occupies residues 347 to 367 (VLVIAILAAVVGSQAVITGTF). Topologically, residues 368–394 (SIIKQCSSLSCFPGVKIVHTSSTVHGQ) are cytoplasmic. Residues 395–415 (IYIPEINWILMILCLAVTLGF) form a helical membrane-spanning segment. The Extracellular portion of the chain corresponds to 416–425 (RNTKHLANAQ). A helical transmembrane segment spans residues 426–446 (GLAVITVMLVTTCLMSLVIVL). At 447 to 451 (CWNKS) the chain is on the cytoplasmic side. A helical membrane pass occupies residues 452-472 (IFLALGFLIFFGTIEVLYFSA). Residues 473–479 (SLVKFHE) lie on the Extracellular side of the membrane. The helical transmembrane segment at 480–500 (GAWVPITLSFIFMIVMCVWHY) threads the bilayer. Topologically, residues 501 to 770 (GTIKKYEFDF…TLEVGMVYQV (270 aa)) are cytoplasmic.

The protein belongs to the HAK/KUP transporter (TC 2.A.72.3) family.

The protein resides in the membrane. In terms of biological role, high-affinity potassium transporter. This chain is Potassium transporter 25 (HAK25), found in Oryza sativa subsp. japonica (Rice).